A 643-amino-acid chain; its full sequence is DNA polymerase III subunit tau (643 aa).

45–52 (GTRGVGKT) provides a ligand contact to ATP. The Zn(2+) site is built by C64, C73, C76, and C79. The tract at residues 385-404 (TPTQVPPQPQSAPQQAPTVP) is disordered.

It belongs to the DnaX/STICHEL family. In terms of assembly, the DNA polymerase III holoenzyme complex contains at least 10 different subunits organized into 3 functionally essential subassemblies: the Pol III core, the beta sliding clamp processivity factor and the clamp-loading complex. The Pol III core (subunits alpha, epsilon and theta) contains the polymerase and the 3'-5' exonuclease proofreading activities. The polymerase is tethered to the template via the dimeric beta sliding clamp processivity factor. The clamp-loading complex (also called gamma complex) assembles the beta sliding clamp onto the primed template and plays a central role in the organization and communication at the replication fork. The clamp-loading complex contains delta, delta', psi and chi, and 3 copies of either or both of two different DnaX proteins, gamma and tau. The DNA replisome complex has a single clamp loader (3 tau and 1 each of delta, delta', psi and chi subunits) which binds 3 Pol III cores (1 core on the leading strand and 2 on the lagging strand) each with a beta sliding clamp dimer. Additional proteins in the replisome are other copies of gamma, psi and chi, Ssb, DNA helicase and RNA primase. The clamp loader hydrolyzes ATP to assemble the beta processivity factor onto the primed template and plays a central role in the organization and communication at the replication fork; the minimal complex to load the beta sliding clamp on DNA is delta, delta', gamma.

It catalyses the reaction DNA(n) + a 2'-deoxyribonucleoside 5'-triphosphate = DNA(n+1) + diphosphate. In terms of biological role, part of the beta sliding clamp loading complex, which hydrolyzes ATP to load the beta clamp onto primed DNA to form the DNA replication pre-initiation complex. DNA polymerase III is a complex, multichain enzyme responsible for most of the replicative synthesis in bacteria. This DNA polymerase also exhibits 3'-5' exonuclease activity. The gamma complex (gamma(3),delta,delta') is thought to load beta dimers onto DNA by binding ATP which alters the complex's conformation so it can bind beta sliding clamp dimers and open them at one interface. Primed DNA is recognized, ATP is hydrolyzed releasing the gamma complex and closing the beta sliding clamp ring around the primed DNA. Functionally, serves as a scaffold to trimerize the core complex. Interacts with the delta and delta' subunits to transfer the beta subunit on the DNA. Interacts with ATP, drives ATP-induced conformational changes in the gamma complex that opens the beta sliding clamp ring. After loading of primed DNA ATP is hydrolyzed and the beta sliding clamp ring closes. The polypeptide is DNA polymerase III subunit tau (dnaX) (Escherichia coli (strain K12)).